Consider the following 560-residue polypeptide: Poly(3-hydroxyalkanoate) polymerase 2 (560 aa).

The active site involves C296.

It belongs to the PHA/PHB synthase family. Type II PhaC subfamily.

Its pathway is biopolymer metabolism; poly-(R)-3-hydroxybutanoate biosynthesis. In terms of biological role, synthesizes poly(3-hydroxyalkanoates) (PHA), complements a mutant of P.putida that does not make PHA. This Ectopseudomonas oleovorans (Pseudomonas oleovorans) protein is Poly(3-hydroxyalkanoate) polymerase 2.